The chain runs to 899 residues: 1,4-alpha-glucan-branching enzyme 3, chloroplastic/amyloplastic (899 aa).

Residues 1 to 49 (MVSLSNQTRFSFHPNNLVVSEKRRLGISGVNFPRKIKLKITCFAAERPR) constitute a chloroplast transit peptide. Residues 47–67 (RPRQEKQKKKSQSQSTSDAEA) are disordered. The active-site Proton donor is the Glu-612.

It belongs to the glycosyl hydrolase 13 family. GlgB subfamily. In terms of assembly, monomer. As to expression, mostly expressed in flowers and inflorescence, and, to a lower extent, in seedlings, roots, stems, leaves, siliques and seeds.

The protein localises to the plastid. The protein resides in the chloroplast stroma. It is found in the amyloplast. The catalysed reaction is Transfers a segment of a (1-&gt;4)-alpha-D-glucan chain to a primary hydroxy group in a similar glucan chain.. The protein operates within glycan biosynthesis; starch biosynthesis. Functionally, catalyzes the formation of the alpha-1,6-glucosidic linkages in starch by scission of a 1,4-alpha-linked oligosaccharide from growing alpha-1,4-glucan chains and the subsequent attachment of the oligosaccharide to the alpha-1,6 position. Essential during embryogenesis. The polypeptide is 1,4-alpha-glucan-branching enzyme 3, chloroplastic/amyloplastic (SBE3) (Arabidopsis thaliana (Mouse-ear cress)).